Here is a 416-residue protein sequence, read N- to C-terminus: Serine hydroxymethyltransferase (416 aa).

(6S)-5,6,7,8-tetrahydrofolate is bound by residues Leu-121 and 125–127 (GHL). Lys-229 bears the N6-(pyridoxal phosphate)lysine mark.

The protein belongs to the SHMT family. Homodimer. It depends on pyridoxal 5'-phosphate as a cofactor.

It localises to the cytoplasm. The catalysed reaction is (6R)-5,10-methylene-5,6,7,8-tetrahydrofolate + glycine + H2O = (6S)-5,6,7,8-tetrahydrofolate + L-serine. Its pathway is one-carbon metabolism; tetrahydrofolate interconversion. It participates in amino-acid biosynthesis; glycine biosynthesis; glycine from L-serine: step 1/1. In terms of biological role, catalyzes the reversible interconversion of serine and glycine with tetrahydrofolate (THF) serving as the one-carbon carrier. This reaction serves as the major source of one-carbon groups required for the biosynthesis of purines, thymidylate, methionine, and other important biomolecules. Also exhibits THF-independent aldolase activity toward beta-hydroxyamino acids, producing glycine and aldehydes, via a retro-aldol mechanism. The sequence is that of Serine hydroxymethyltransferase from Azoarcus sp. (strain BH72).